We begin with the raw amino-acid sequence, 379 residues long: MNVFWFLPTHGDGRYLGTAEGARPVTLPYLRQIAQAADDLGYHGVLVPTGRSCEDAWAVASAMIPLTQRLRFLVAVRPGVVSPTWAARMASTVDRLSDGRLLVNVVTGGDPAESEGDGVFLKHDDRYVVTDEFLGIWRRVMAGETVDFTGQHLRVKGAKILFPPLQAPHPPLYFGGSSPAAHGLAARHVDVYLTWGEPPAAVAEKIADVRRRAAAEQRTVRFGIRLHVIVRETSEAAWAAANDLIRHLDDSTIAAAQQAFGRLDSEGQRRMAALHKGRRDALEVSPNLWAGVGLVRGGAGTALVGDAETVARRMKEYAELGIETFILSGYPHLEEAYRVAELLFPRLPVERRTAGVSPNLTGPFGEIIANDIVPHRSQS.

Belongs to the SsuD family.

It carries out the reaction an alkanesulfonate + FMNH2 + O2 = an aldehyde + FMN + sulfite + H2O + 2 H(+). Its function is as follows. Catalyzes the desulfonation of aliphatic sulfonates. The sequence is that of Alkanesulfonate monooxygenase from Sorangium cellulosum (strain So ce56) (Polyangium cellulosum (strain So ce56)).